A 109-amino-acid chain; its full sequence is Nucleoid-associated protein plu3840 (109 aa).

Disordered regions lie at residues 1–23 (MFGK…KMQK) and 89–109 (KEKM…KMPF).

The protein belongs to the YbaB/EbfC family. Homodimer.

It localises to the cytoplasm. Its subcellular location is the nucleoid. Its function is as follows. Binds to DNA and alters its conformation. May be involved in regulation of gene expression, nucleoid organization and DNA protection. The protein is Nucleoid-associated protein plu3840 of Photorhabdus laumondii subsp. laumondii (strain DSM 15139 / CIP 105565 / TT01) (Photorhabdus luminescens subsp. laumondii).